Here is an 85-residue protein sequence, read N- to C-terminus: Probable Sec-independent protein translocase protein TatE (85 aa).

A helical membrane pass occupies residues 1-21 (MEGLSITKLLVVGILIVLLFG). Residues 64–85 (KTVAETKAASDSQAAASVERKD) are disordered.

It belongs to the TatA/E family. TatE subfamily.

The protein localises to the cell inner membrane. Its function is as follows. Part of the twin-arginine translocation (Tat) system that transports large folded proteins containing a characteristic twin-arginine motif in their signal peptide across membranes. TatE shares overlapping functions with TatA. The sequence is that of Probable Sec-independent protein translocase protein TatE from Yersinia pestis.